The chain runs to 529 residues: MDSWLLSLLIAGVVFAIFQLRTVGQRPAGCPPGPPTLPIIGNLHQIPNKNTHVQFKKWADEYGPVYSLVLGTTIMIVLSSDAAIKDLTRGVESTHRAQICISVPWQAAGFAWSLCDTWRQFRKLFHSFTHLGAAKSYVPYQDLESTSMMVSLLDNPDLVFDHIRRFTTSLSTQMIYGFRTPRTDDPMLLQMYDGFEKWSTLIGAGPAKLLDVFPVLRSLPAAIRPLYSHALALQKKKSELSFGLWQDAKRKVEDKTSKPCFCVGLVQAQAEEGLTDHVAGMIASSALEAGSDTTASTLTGFLQAMVLYPAAQKSAQASIDRACADRFPTIADMDNPETQYIHACVKESLRWMPTTILGVPHAVTVDDEYMGYRIPKGAGVVYNVWAVHMDPRRYPNPRAFDPTRYMQDLASSAESAQNSDVSQRDHFAFGAGRRICVGMHVVDRSMFLVIARLMWAFDISKAVDVDGDDFVGGILVRPRPFPVKITPRSESRAAKVREAWAACQVLLDQGQQWKQVPEGMPFTTYTGGD.

The chain crosses the membrane as a helical span at residues 4-24 (WLLSLLIAGVVFAIFQLRTVG). Heme is bound at residue cysteine 436.

This sequence belongs to the cytochrome P450 family. It depends on heme as a cofactor.

It localises to the membrane. Cytochrome P450 monooxygenase; part of the gene cluster that mediates the biosynthesis of the enfumafungin-type antibiotic fuscoatroside. Four enzymes are sufficient to produce fuscoatroside: the terpene cyclase-glycosyl transferase fusion protein fsoAthe cytochrome P450 monoxygenases fsoD and fsoE, and the acetyltransferase fsoF; the cytochrome P450 monooxygenase fsoB and the glucose oxidase-like protein fsoC do not seem to play a role in biosynthesis of fuscoatroside. This is Cytochrome P450 monooxygenase fsoB from Humicola fuscoatra.